We begin with the raw amino-acid sequence, 92 residues long: Probable Fe(2+)-trafficking protein (92 aa).

The protein belongs to the Fe(2+)-trafficking protein family.

Could be a mediator in iron transactions between iron acquisition and iron-requiring processes, such as synthesis and/or repair of Fe-S clusters in biosynthetic enzymes. The protein is Probable Fe(2+)-trafficking protein of Shewanella sp. (strain ANA-3).